The primary structure comprises 67 residues: Conotoxin Lt5.9 (67 aa).

The N-terminal stretch at 1–19 (MLCLPVFIILLLLASPAAP) is a signal peptide. The propeptide occupies 20-46 (KSFETKVQSDLTRTDGNMETEENLGEV).

It belongs to the conotoxin T superfamily. Post-translationally, contains 2 disulfide bonds that can be either 'C1-C3, C2-C4' or 'C1-C4, C2-C3', since these disulfide connectivities have been observed for conotoxins with cysteine framework V (for examples, see AC P0DQQ7 and AC P81755). Expressed by the venom duct.

Its subcellular location is the secreted. In Conus litteratus (Lettered cone), this protein is Conotoxin Lt5.9.